The primary structure comprises 418 residues: MINFDGIKKITERLKWKQGDEDENWAKKAIDNLMKKLIKHNKQALENLEFALRCQGQQKTECVTIPRSLDGRLQISHRKALPHVIYCRVYRWPDLQSHHELKAIEDCRFCYESGQKDICINPYHYKRVHATGVLPPVLVPRYSEKPPQEVPPTLAKFQLMEMSGSRMPQNVNMANVNFTANQFHQYNPNGIEEMDTSQKFDIPPGVPTCLVPFDKVWEEQFWATVSYYELNTRVGEQVKVSSTTITIDGFTDPCINGSKISLGLFSNVNRNATIENTRRHIGNGVKLTYVRSNGSLFAQCESDSAIFVQSSNCNYINGFHSTTVVKIANKCSLKIFDMEIFRQLLEDCSRRGFDASFDLQKMTFIRMSFVKGWGAEYQRQDVTSTPCWIEIHLHAPLAWLDRVLSTMGPTPRPISSIS.

The region spanning K8–L134 is the MH1 domain. Zn(2+) contacts are provided by C62, C107, C119, and H124. The 197-residue stretch at W222–S418 folds into the MH2 domain.

The protein belongs to the dwarfin/SMAD family.

It localises to the cytoplasm. It is found in the nucleus. Functionally, involved in TGF-beta pathway. Plays a role in male tail tip morphogenesis. This is Dwarfin sma-2 from Caenorhabditis elegans.